Here is a 177-residue protein sequence, read N- to C-terminus: RNA pyrophosphohydrolase (177 aa).

The region spanning 6–149 (GYRPNVGIVI…KRDVYRRVMK (144 aa)) is the Nudix hydrolase domain. The Nudix box signature appears at 38 to 59 (GGINPGESPEQAMYRELFEEVG).

This sequence belongs to the Nudix hydrolase family. RppH subfamily. The cofactor is a divalent metal cation.

In terms of biological role, accelerates the degradation of transcripts by removing pyrophosphate from the 5'-end of triphosphorylated RNA, leading to a more labile monophosphorylated state that can stimulate subsequent ribonuclease cleavage. This is RNA pyrophosphohydrolase from Pectobacterium atrosepticum (strain SCRI 1043 / ATCC BAA-672) (Erwinia carotovora subsp. atroseptica).